We begin with the raw amino-acid sequence, 297 residues long: ER membrane protein complex subunit 2-B (297 aa).

TPR repeat units follow at residues 87-120, 155-188, and 192-225; these read HRVKRLTGLRFEAMERYDDALQIYDRILQDDPTN, QEAWHELAELYINELDYAKAAFCLEELILTNPHN, and YQQFAEVKYTQGGLENLELSRKYFSQALKLNNHS.

It belongs to the EMC2 family. Component of the ER membrane protein complex (EMC).

The protein resides in the endoplasmic reticulum membrane. In terms of biological role, part of the endoplasmic reticulum membrane protein complex (EMC) that enables the energy-independent insertion into endoplasmic reticulum membranes of newly synthesized membrane proteins. Preferentially accommodates proteins with transmembrane domains that are weakly hydrophobic or contain destabilizing features such as charged and aromatic residues. Involved in the cotranslational insertion of multi-pass membrane proteins in which stop-transfer membrane-anchor sequences become ER membrane spanning helices. It is also required for the post-translational insertion of tail-anchored/TA proteins in endoplasmic reticulum membranes. By mediating the proper cotranslational insertion of N-terminal transmembrane domains in an N-exo topology, with translocated N-terminus in the lumen of the ER, controls the topology of multi-pass membrane proteins. By regulating the insertion of various proteins in membranes, it is indirectly involved in many cellular processes. This chain is ER membrane protein complex subunit 2-B (emc2-b), found in Xenopus laevis (African clawed frog).